A 396-amino-acid chain; its full sequence is Subtilisin-like protease 5 (396 aa).

An N-terminal signal peptide occupies residues 1–20 (MTGFFTILSFSLAALSVTNA). Positions 21–116 (AQILSVPKGA…VEPDAIISQH (96 aa)) are excised as a propeptide. The Inhibitor I9 domain occupies 37-113 (YIVVMKDDTS…VAFVEPDAII (77 aa)). The region spanning 125 to 396 (PWGLSRLSNR…SRLLYNGSGR (272 aa)) is the Peptidase S8 domain. Catalysis depends on charge relay system residues aspartate 156 and histidine 187. 2 N-linked (GlcNAc...) asparagine glycosylation sites follow: asparagine 230 and asparagine 248. The Charge relay system role is filled by serine 342. Residues 376-389 (PTIRNPGPDTTSRL) show a composition bias toward polar residues. The interval 376-396 (PTIRNPGPDTTSRLLYNGSGR) is disordered. A glycan (N-linked (GlcNAc...) asparagine) is linked at asparagine 392.

This sequence belongs to the peptidase S8 family.

The protein resides in the secreted. In terms of biological role, secreted subtilisin-like serine protease with keratinolytic activity that contributes to pathogenicity. The sequence is that of Subtilisin-like protease 5 (SUB5) from Arthroderma benhamiae (strain ATCC MYA-4681 / CBS 112371) (Trichophyton mentagrophytes).